The following is a 723-amino-acid chain: Dipeptidyl aminopeptidase BI (723 aa).

The N-terminal stretch at 1–23 (MKPTSLLLAATVLMSTPITSALA) is a signal peptide. Catalysis depends on charge relay system residues serine 574, aspartate 659, and histidine 694.

It belongs to the peptidase S9A family. In terms of assembly, monomer.

Its activity is regulated as follows. Nearly completely inhibited by 0.5 mM ZnCl(2), 0.1 mM N-tosyl-L-lysyl chloromethyl ketone (TLCK) and 0.1 mM leupeptin. Strongly inhibited by 0.5 mM CoCl(2) and 0.1 mM chymostatin. Activity is hardly affected by general serine protease inhibitors phenylmethanesulfonyl fluoride (PMSF), diisopropyl fluorophosphate (DFP) and N-tosyl-L-phenyl-alanyl chloromethyl ketone (TPCK) or by aspartyl protease inhibitor pepstatin A or by CaCl(2) and EDTA. Cysteine protease inhibitors, such as N-ethylmaleimide (NEM), iodoacetic acid and L-trans-epoxysuccinyl-leucylamido(4-guanido)butane (E-64) have no effect on activity. Sequentially removes dipeptide units (NH3-P2-P1-) from the amino termini of peptides and proteins. Is able to catalyze the removal of Asp-Arg from the amino termini of angiotensins I and II. Has slight endopeptidase activity on N-terminally blocked peptide derivatives which contain arginine residues at the P1 position. Does not hydrolyze Ala-Ala-Ala and Ala-Ala-Ala-Ala substrates or insulin beta chain. In Pseudoxanthomonas mexicana, this protein is Dipeptidyl aminopeptidase BI.